The sequence spans 529 residues: Bifunctional purine biosynthesis protein PurH (529 aa).

Residues Thr-2–Thr-149 enclose the MGS-like domain.

This sequence belongs to the PurH family.

The enzyme catalyses (6R)-10-formyltetrahydrofolate + 5-amino-1-(5-phospho-beta-D-ribosyl)imidazole-4-carboxamide = 5-formamido-1-(5-phospho-D-ribosyl)imidazole-4-carboxamide + (6S)-5,6,7,8-tetrahydrofolate. It carries out the reaction IMP + H2O = 5-formamido-1-(5-phospho-D-ribosyl)imidazole-4-carboxamide. The protein operates within purine metabolism; IMP biosynthesis via de novo pathway; 5-formamido-1-(5-phospho-D-ribosyl)imidazole-4-carboxamide from 5-amino-1-(5-phospho-D-ribosyl)imidazole-4-carboxamide (10-formyl THF route): step 1/1. It participates in purine metabolism; IMP biosynthesis via de novo pathway; IMP from 5-formamido-1-(5-phospho-D-ribosyl)imidazole-4-carboxamide: step 1/1. The polypeptide is Bifunctional purine biosynthesis protein PurH (Cereibacter sphaeroides (strain ATCC 17029 / ATH 2.4.9) (Rhodobacter sphaeroides)).